Reading from the N-terminus, the 504-residue chain is Melianol synthase CYP71BQ5 (504 aa).

A helical transmembrane segment spans residues 2–22 (EFRLPSLPVFLSFLLFFLMLV). Cysteine 442 serves as a coordination point for heme.

Belongs to the cytochrome P450 family. Heme is required as a cofactor. In terms of tissue distribution, mainly expressed in fruits and leaves.

The protein resides in the membrane. It carries out the reaction dihydroniloticin + 2 reduced [NADPH--hemoprotein reductase] + 2 O2 = melianol + 2 oxidized [NADPH--hemoprotein reductase] + 3 H2O + 2 H(+). The protein operates within secondary metabolite biosynthesis; terpenoid biosynthesis. Monooxygenase involved in the biosynthesis of limonoids triterpene natural products such as azadirachtin, an antifeedant widely used as bioinsecticide, and possessing many medicinal applications including anti-tumoral, anti-malarial, anti-rheumatic, antibacterial, anti-inflammatory, anti-pyretic and diuretic effects. Catalyzes the conversion of dihydroniloticin to the protolimonoid melianol. This Azadirachta indica (Neem tree) protein is Melianol synthase CYP71BQ5.